The following is a 223-amino-acid chain: Ribose-5-phosphate isomerase A (223 aa).

Residues 32–35 (TGST), 83–86 (DGAD), and 96–99 (KGGG) contribute to the substrate site. Glu-105 acts as the Proton acceptor in catalysis. Lys-123 lines the substrate pocket.

The protein belongs to the ribose 5-phosphate isomerase family. As to quaternary structure, homodimer.

It catalyses the reaction aldehydo-D-ribose 5-phosphate = D-ribulose 5-phosphate. It participates in carbohydrate degradation; pentose phosphate pathway; D-ribose 5-phosphate from D-ribulose 5-phosphate (non-oxidative stage): step 1/1. Catalyzes the reversible conversion of ribose-5-phosphate to ribulose 5-phosphate. This Acinetobacter baumannii (strain SDF) protein is Ribose-5-phosphate isomerase A.